A 149-amino-acid chain; its full sequence is D-aminoacyl-tRNA deacylase (149 aa).

A Gly-cisPro motif, important for rejection of L-amino acids motif is present at residues 137-138; that stretch reads GP.

This sequence belongs to the DTD family. As to quaternary structure, homodimer.

The protein resides in the cytoplasm. It catalyses the reaction glycyl-tRNA(Ala) + H2O = tRNA(Ala) + glycine + H(+). It carries out the reaction a D-aminoacyl-tRNA + H2O = a tRNA + a D-alpha-amino acid + H(+). In terms of biological role, an aminoacyl-tRNA editing enzyme that deacylates mischarged D-aminoacyl-tRNAs. Also deacylates mischarged glycyl-tRNA(Ala), protecting cells against glycine mischarging by AlaRS. Acts via tRNA-based rather than protein-based catalysis; rejects L-amino acids rather than detecting D-amino acids in the active site. By recycling D-aminoacyl-tRNA to D-amino acids and free tRNA molecules, this enzyme counteracts the toxicity associated with the formation of D-aminoacyl-tRNA entities in vivo and helps enforce protein L-homochirality. The protein is D-aminoacyl-tRNA deacylase of Geobacter sp. (strain M21).